A 289-amino-acid polypeptide reads, in one-letter code: 4-diphosphocytidyl-2-C-methyl-D-erythritol kinase (289 aa).

Residue lysine 10 is part of the active site. 94–104 (PVAAGLAGGSS) is an ATP binding site. The active site involves aspartate 136.

Belongs to the GHMP kinase family. IspE subfamily.

It carries out the reaction 4-CDP-2-C-methyl-D-erythritol + ATP = 4-CDP-2-C-methyl-D-erythritol 2-phosphate + ADP + H(+). It participates in isoprenoid biosynthesis; isopentenyl diphosphate biosynthesis via DXP pathway; isopentenyl diphosphate from 1-deoxy-D-xylulose 5-phosphate: step 3/6. Functionally, catalyzes the phosphorylation of the position 2 hydroxy group of 4-diphosphocytidyl-2C-methyl-D-erythritol. This is 4-diphosphocytidyl-2-C-methyl-D-erythritol kinase from Bacillus anthracis.